The following is a 616-amino-acid chain: Chaperone protein HscA homolog (616 aa).

It belongs to the heat shock protein 70 family.

Functionally, chaperone involved in the maturation of iron-sulfur cluster-containing proteins. Has a low intrinsic ATPase activity which is markedly stimulated by HscB. The chain is Chaperone protein HscA homolog from Vibrio atlanticus (strain LGP32) (Vibrio splendidus (strain Mel32)).